The chain runs to 253 residues: uncharacterized protein (253 aa).

The interval 211–241 (TTRRKRYREDRDSGEDLGAESKRGNGSVRYT) is disordered.

This is an uncharacterized protein from Ictalurid herpesvirus 1 (strain Auburn) (IcHV-1).